The sequence spans 860 residues: Translation initiation factor IF-2 (860 aa).

Positions 1 to 11 (MSDTKSGDDKT) are enriched in basic and acidic residues. The disordered stretch occupies residues 1-265 (MSDTKSGDDK…MRRRQEKFKR (265 aa)). The segment covering 79 to 88 (AAPVVQEAPK) has biased composition (low complexity). Over residues 110 to 183 (SRSEMEARRR…RRRAEEEARR (74 aa)) the composition is skewed to basic and acidic residues. A tr-type G domain is found at 358-525 (PRPPVVTIMG…AILLQAEILD (168 aa)). The segment at 367 to 374 (GHVDHGKT) is G1. 367–374 (GHVDHGKT) contributes to the GTP binding site. The G2 stretch occupies residues 392–396 (GITQH). The segment at 413-416 (DTPG) is G3. GTP-binding positions include 413–417 (DTPGH) and 467–470 (NKID). The tract at residues 467 to 470 (NKID) is G4. Residues 503 to 505 (SAT) are G5.

Belongs to the TRAFAC class translation factor GTPase superfamily. Classic translation factor GTPase family. IF-2 subfamily.

The protein localises to the cytoplasm. One of the essential components for the initiation of protein synthesis. Protects formylmethionyl-tRNA from spontaneous hydrolysis and promotes its binding to the 30S ribosomal subunits. Also involved in the hydrolysis of GTP during the formation of the 70S ribosomal complex. The polypeptide is Translation initiation factor IF-2 (Mesorhizobium japonicum (strain LMG 29417 / CECT 9101 / MAFF 303099) (Mesorhizobium loti (strain MAFF 303099))).